The following is a 90-amino-acid chain: Barrier-to-autointegration factor B (90 aa).

It belongs to the BAF family. As to quaternary structure, homodimer. Interacts with nemp1a and nemp1b.

The protein localises to the nucleus. Its subcellular location is the chromosome. It localises to the nucleus envelope. The protein resides in the cytoplasm. In terms of biological role, non-specific DNA-binding protein that plays key roles in mitotic nuclear reassembly, chromatin organization, DNA damage response, gene expression and intrinsic immunity against foreign DNA. Contains two non-specific double-stranded DNA (dsDNA)-binding sites which promote DNA cross-bridging. Plays a key role in nuclear membrane reformation at the end of mitosis by driving formation of a single nucleus in a spindle-independent manner. Transiently cross-bridges anaphase chromosomes via its ability to bridge distant DNA sites, leading to the formation of a dense chromatin network at the chromosome ensemble surface that limits membranes to the surface. Also acts as a negative regulator of innate immune activation by restricting CGAS activity toward self-DNA upon acute loss of nuclear membrane integrity. Outcompetes CGAS for DNA-binding, thereby preventing CGAS activation and subsequent damaging autoinflammatory responses. Also involved in DNA damage response; acts by inhibiting the ADP-ribosyltransferase activity of PARP1. Involved in the recognition of exogenous dsDNA in the cytosol: associates with exogenous dsDNA immediately after its appearance in the cytosol at endosome breakdown and is required to avoid autophagy. The sequence is that of Barrier-to-autointegration factor B (banf1-b) from Xenopus laevis (African clawed frog).